Consider the following 628-residue polypeptide: Biosynthetic arginine decarboxylase (628 aa).

K99 carries the N6-(pyridoxal phosphate)lysine modification. Residue 279 to 289 (VDVGGGLGIDY) participates in substrate binding.

It belongs to the Orn/Lys/Arg decarboxylase class-II family. SpeA subfamily. Mg(2+) is required as a cofactor. Pyridoxal 5'-phosphate serves as cofactor.

The catalysed reaction is L-arginine + H(+) = agmatine + CO2. Functionally, catalyzes the biosynthesis of agmatine from arginine. This is Biosynthetic arginine decarboxylase from Xanthomonas campestris pv. campestris (strain ATCC 33913 / DSM 3586 / NCPPB 528 / LMG 568 / P 25).